Consider the following 204-residue polypeptide: LexA repressor (204 aa).

Residues 29-49 (VREICKGVGLSSTSSVHGHLS) constitute a DNA-binding region (H-T-H motif). Residues Ser-126 and Lys-163 each act as for autocatalytic cleavage activity in the active site.

This sequence belongs to the peptidase S24 family. In terms of assembly, homodimer.

It carries out the reaction Hydrolysis of Ala-|-Gly bond in repressor LexA.. Its function is as follows. Represses a number of genes involved in the response to DNA damage (SOS response), including recA and lexA. In the presence of single-stranded DNA, RecA interacts with LexA causing an autocatalytic cleavage which disrupts the DNA-binding part of LexA, leading to derepression of the SOS regulon and eventually DNA repair. The sequence is that of LexA repressor from Clostridium novyi (strain NT).